The primary structure comprises 558 residues: uncharacterized protein (558 aa).

A coiled-coil region spans residues 47–78 (DFDDLNSIFKDFQKQKKNLKDNILKFYNKKKE). 2 disordered regions span residues 239–266 (NNNN…SKIE) and 424–447 (NNNN…NSGE). The segment covering 245-266 (TETESEIESKSESESESESKIE) has biased composition (basic and acidic residues). Positions 424–444 (NNNNNNNNNNNNNNNNNNNNN) are enriched in low complexity.

This is an uncharacterized protein from Dictyostelium discoideum (Social amoeba).